We begin with the raw amino-acid sequence, 110 residues long: uncharacterized protein (110 aa).

The stretch at 16–46 (ELDKLRECEERLSVIEKQKQSSKQESEETYI) forms a coiled coil. Over residues 85-96 (EEKDKKCQRKPE) the composition is skewed to basic and acidic residues. Residues 85–110 (EEKDKKCQRKPEAPSTPAVTIRSKRQ) form a disordered region.

This is an uncharacterized protein from Bacillus subtilis (strain 168).